The chain runs to 236 residues: 2-C-methyl-D-erythritol 4-phosphate cytidylyltransferase (236 aa).

The protein belongs to the IspD/TarI cytidylyltransferase family. IspD subfamily. As to quaternary structure, homodimer.

The catalysed reaction is 2-C-methyl-D-erythritol 4-phosphate + CTP + H(+) = 4-CDP-2-C-methyl-D-erythritol + diphosphate. Its pathway is isoprenoid biosynthesis; isopentenyl diphosphate biosynthesis via DXP pathway; isopentenyl diphosphate from 1-deoxy-D-xylulose 5-phosphate: step 2/6. Functionally, catalyzes the formation of 4-diphosphocytidyl-2-C-methyl-D-erythritol from CTP and 2-C-methyl-D-erythritol 4-phosphate (MEP). The polypeptide is 2-C-methyl-D-erythritol 4-phosphate cytidylyltransferase (Salmonella paratyphi B (strain ATCC BAA-1250 / SPB7)).